We begin with the raw amino-acid sequence, 98 residues long: Large ribosomal subunit protein uL23 (98 aa).

It belongs to the universal ribosomal protein uL23 family. In terms of assembly, part of the 50S ribosomal subunit. Contacts protein L29, and trigger factor when it is bound to the ribosome.

Functionally, one of the early assembly proteins it binds 23S rRNA. One of the proteins that surrounds the polypeptide exit tunnel on the outside of the ribosome. Forms the main docking site for trigger factor binding to the ribosome. This chain is Large ribosomal subunit protein uL23, found in Thioalkalivibrio sulfidiphilus (strain HL-EbGR7).